Consider the following 260-residue polypeptide: MKRYKNVRNRDINGILLLDKPKGISSGLFLNKIKKLFNAKKIGHTGTLDPLATGMLPVCFGKATKLAKYLLHSDKRYKVSAQLGVSTDTFDSDGTIISVSPVQSNDYILEQCLESFIGIRNQIPPMFSSLKYRGVPLYKYARKGIYFPRKPRSIHIYNLSLIKKTENIIELDVHCSTGTYIRSIVNDIGEYLGCGAHVIELRRLSVGQYISSSMINPATLEAIFYNDSFDDVQVFCKLDAFLTPMNMIMLELANISNEKC.

Position 44 (His44) interacts with substrate. Catalysis depends on Asp49, which acts as the Nucleophile. 3 residues coordinate substrate: Tyr77, Tyr180, and Leu201.

The protein belongs to the pseudouridine synthase TruB family. Type 1 subfamily.

It carries out the reaction uridine(55) in tRNA = pseudouridine(55) in tRNA. In terms of biological role, responsible for synthesis of pseudouridine from uracil-55 in the psi GC loop of transfer RNAs. In Blochmanniella pennsylvanica (strain BPEN), this protein is tRNA pseudouridine synthase B.